A 35-amino-acid chain; its full sequence is Cupiennin-1b (35 aa).

Glu-35 carries the post-translational modification Glutamic acid 1-amide.

Belongs to the cationic peptide 04 (cupiennin) family. 01 subfamily. In terms of tissue distribution, expressed by the venom gland.

It is found in the secreted. In terms of biological role, has antimicrobial activity against E.coli, E.faecalis, P.aeruginosa, and S.aureus. Has insecticidal and hemolytic activities. Probably acts by disturbing membrane function with its amphipathic structure. The protein is Cupiennin-1b of Cupiennius salei (American wandering spider).